A 264-amino-acid chain; its full sequence is Agamous-like MADS-box protein AGL15 (264 aa).

The 55-residue stretch at 3–57 (RGKIEIKRIENANSRQVTFSKRRAGLLKKAHELSVLCDAEVAVIVFSKSGKLFEF) folds into the MADS-box domain. The K-box domain maps to 87–177 (NQEECTEVDL…RRQVQELRSF (91 aa)). The tract at residues 223–264 (LQLGLPGEAHDTRKNEGDRESPSSDSVTTSTTRATAQRISLV) is disordered. Positions 230-244 (EAHDTRKNEGDRESP) are enriched in basic and acidic residues. Positions 245–257 (SSDSVTTSTTRAT) are enriched in low complexity.

It localises to the nucleus. Probable transcription factor. This is Agamous-like MADS-box protein AGL15 (AGL15) from Brassica napus (Rape).